Here is a 199-residue protein sequence, read N- to C-terminus: Recombination protein RecR (199 aa).

The segment at C56–C71 adopts a C4-type zinc-finger fold. A Toprim domain is found at A79 to P174.

This sequence belongs to the RecR family.

Its function is as follows. May play a role in DNA repair. It seems to be involved in an RecBC-independent recombinational process of DNA repair. It may act with RecF and RecO. The polypeptide is Recombination protein RecR (Clavibacter michiganensis subsp. michiganensis (strain NCPPB 382)).